The following is a 383-amino-acid chain: Transcription termination factor Rho (383 aa).

The disordered stretch occupies residues 1-22 (MTIETTTKKRPRAARPPRPRES). The span at 8–17 (KKRPRAARPP) shows a compositional bias: basic residues. Residues 26 to 93 (LETVAGLLDV…AEVESVNGST (68 aa)) form the Rho RNA-BD domain. ATP-binding positions include 132–137 (GKGQRG), 144–149 (KAGKTM), and Arg175.

This sequence belongs to the Rho family. In terms of assembly, homohexamer. The homohexamer assembles into an open ring structure.

Functionally, facilitates transcription termination by a mechanism that involves Rho binding to the nascent RNA, activation of Rho's RNA-dependent ATPase activity, and release of the mRNA from the DNA template. The chain is Transcription termination factor Rho from Streptosporangium roseum (strain ATCC 12428 / DSM 43021 / JCM 3005 / KCTC 9067 / NCIMB 10171 / NRRL 2505 / NI 9100).